The chain runs to 464 residues: MSKVVTRFAPSPTGHLHLGGARTAVFSWLLARHFGGEFVLRIEDTDMERSKQEYTDSILASMAWLGLDWDGEPVYQSRRFDLYNEYIDRLLAEGKAYWCECSPEEVEAMRETARARGLKPKYNGRCRERGLQGGEGRVVRLKAPLTGKTVFTDLVKGTIAFDNSELDDMIIRRADGSPTYNLAVVVDDATMGVTHVLRGDDHVNNTPKQILLYEALGLPVPEFGHVPMILGPDRQKLSKRHGAKAVIDYKETGLLPQALVNYLVRLGWSYGDQEKFSLDELIEKFSTDNLSRSAAGFDPEKLQWLNGQYIRETPDDQLAGLVRPFLAETGYGQIDAAFLTVAAGLYKERAHDLVELAAAMKPVLCADDALEFDAKAVEKALTAEGRGHLAALRQAFAACADFDGHTAHEVLQRYVADNGLKFKAVGPPLRVALLGAMGGPDLSAVMGLLGRERTLARLDRAAAL.

The 'HIGH' region motif lies at 10 to 20 (PSPTGHLHLGG). Positions 99, 101, 126, and 128 each coordinate Zn(2+). A 'KMSKS' region motif is present at residues 236 to 240 (KLSKR). Residue Lys239 coordinates ATP.

Belongs to the class-I aminoacyl-tRNA synthetase family. Glutamate--tRNA ligase type 1 subfamily. In terms of assembly, monomer. Zn(2+) is required as a cofactor.

The protein resides in the cytoplasm. The catalysed reaction is tRNA(Glu) + L-glutamate + ATP = L-glutamyl-tRNA(Glu) + AMP + diphosphate. Its function is as follows. Catalyzes the attachment of glutamate to tRNA(Glu) in a two-step reaction: glutamate is first activated by ATP to form Glu-AMP and then transferred to the acceptor end of tRNA(Glu). This Oleidesulfovibrio alaskensis (strain ATCC BAA-1058 / DSM 17464 / G20) (Desulfovibrio alaskensis) protein is Glutamate--tRNA ligase.